The sequence spans 58 residues: 6.4 kDa protein (58 aa).

The chain is 6.4 kDa protein from Pseudomonas phage Pf3 (Bacteriophage Pf3).